Reading from the N-terminus, the 246-residue chain is 3'(2'),5'-bisphosphate nucleotidase CysQ (246 aa).

Mg(2+)-binding residues include Glu64, Asp83, Leu85, Asp86, and Asp205. Glu64 serves as a coordination point for substrate. Substrate contacts are provided by residues 85 to 88 (LDGT) and Asp205.

It belongs to the inositol monophosphatase superfamily. CysQ family. The cofactor is Mg(2+).

The protein localises to the cell inner membrane. The enzyme catalyses adenosine 3',5'-bisphosphate + H2O = AMP + phosphate. Its activity is regulated as follows. Inhibited by lithium and calcium. Converts adenosine-3',5'-bisphosphate (PAP) to AMP. May also convert adenosine 3'-phosphate 5'-phosphosulfate (PAPS) to adenosine 5'-phosphosulfate (APS). Has 10000-fold lower activity towards inositol 1,4-bisphosphate (Ins(1,4)P2). The chain is 3'(2'),5'-bisphosphate nucleotidase CysQ from Escherichia coli (strain K12).